The following is a 210-amino-acid chain: MAGPGPGDQDEHYDFLFKLVLVGDASVGKTCVVQRFKTGAFSARQGSTIGVDFTMKTLEIQGKRVKLQIWDTAGQERFRTITQSYYRSANGAILAYDISKRSTFLSVPHWIEDVRKYAGSNIVQLLIGNKSDLADLREVPLAEAQSLAEHYDILCAIETSAKDSSNVEEAFTRVATELIMRHGGPMFSEKNTDHIQLDSKDIAESWGCGC.

23–30 (GDASVGKT) serves as a coordination point for GTP. Residues 45–53 (QGSTIGVDF) carry the Effector region motif. Position 47 is a phosphoserine (Ser-47). Residue 71–75 (DTAGQ) participates in GTP binding. Position 80 is a phosphothreonine (Thr-80). GTP is bound by residues 129–132 (NKSD) and 161–162 (AK). S-geranylgeranyl cysteine attachment occurs at residues Cys-208 and Cys-210. Cys-210 carries the cysteine methyl ester modification.

The protein belongs to the small GTPase superfamily. Rab family. In terms of assembly, interacts with GDI1, GDI2 and CHM; phosphorylation at Thr-80 disrupts these interactions.

It localises to the cytoplasmic vesicle. The protein resides in the phagosome. Its subcellular location is the phagosome membrane. It is found in the golgi apparatus. The protein localises to the trans-Golgi network membrane. It localises to the trans-Golgi network. Functionally, the small GTPases Rab are key regulators of intracellular membrane trafficking, from the formation of transport vesicles to their fusion with membranes. Rabs cycle between an inactive GDP-bound form and an active GTP-bound form that is able to recruit to membranes different set of downstream effectors directly responsible for vesicle formation, movement, tethering and fusion. The low intrinsic GTPase activity of RAB43 is activated by USP6NL. Involved in retrograde transport from the endocytic pathway to the Golgi apparatus. Involved in the transport of Shiga toxin from early and recycling endosomes to the trans-Golgi network. Required for the structural integrity of the Golgi complex. Plays a role in the maturation of phagosomes that engulf pathogens, such as S.aureus and Mycobacterium. The sequence is that of Ras-related protein Rab-43 (Rab43) from Rattus norvegicus (Rat).